The primary structure comprises 458 residues: UDP-N-acetylmuramoylalanine--D-glutamate ligase (458 aa).

124–130 (GSDGKTT) provides a ligand contact to ATP.

This sequence belongs to the MurCDEF family.

Its subcellular location is the cytoplasm. It carries out the reaction UDP-N-acetyl-alpha-D-muramoyl-L-alanine + D-glutamate + ATP = UDP-N-acetyl-alpha-D-muramoyl-L-alanyl-D-glutamate + ADP + phosphate + H(+). It participates in cell wall biogenesis; peptidoglycan biosynthesis. Its function is as follows. Cell wall formation. Catalyzes the addition of glutamate to the nucleotide precursor UDP-N-acetylmuramoyl-L-alanine (UMA). This Clostridium botulinum (strain Langeland / NCTC 10281 / Type F) protein is UDP-N-acetylmuramoylalanine--D-glutamate ligase.